The primary structure comprises 582 residues: Leucine-rich repeat transmembrane neuronal protein 3 (582 aa).

Residues 1–30 (MGFNVIRLLRGSAVAVVLAPTVLLTMLSSA) form the signal peptide. Positions 31–61 (ERGCPKGCRCEGKMVYCESQKLQEIPSSISA) constitute an LRRNT domain. At 31 to 420 (ERGCPKGCRC…VDTEHISFHK (390 aa)) the chain is on the extracellular side. LRR repeat units follow at residues 63 to 83 (CLGLSLRYNSLQKLKYNQFKG), 86 to 107 (QLTWLYLDHNHISNIDENAFNG), 110 to 131 (RLKELILSSNRISYFLNNTFRP), 134 to 155 (NLRNLDLSYNQLHSLGSEQFRG), 158 to 179 (KLLSLHLRSNSLRTIPVRIFQD), 182 to 203 (NLELLDLGYNRIRSLARNVFAG), 206 to 226 (RLKELHLEHNQFSKLNLALFP), 230 to 251 (SLQNLYMQWNKISVIGQTMSWT), 254 to 275 (SLQRLDLSGNEIEAFSGPSVFQ), and 279 to 300 (NLQRLNLDSNKLTFIGQEILDS). N-linked (GlcNAc...) asparagine glycosylation occurs at Asn126. The LRRCT domain maps to 312–363 (NIWECSRNICSLVNWLRSFKGLRENTIICASPKELQGVNVIDAVKNYSICGK). Residue Asn357 is glycosylated (N-linked (GlcNAc...) asparagine). The tract at residues 378 to 410 (KPTFKPKLPRPKHESKPPLPPTVGATEPSPETD) is disordered. The chain crosses the membrane as a helical span at residues 421–441 (IIAGSVALFLSVLVILLVMYV). The Cytoplasmic segment spans residues 442 to 582 (SWKRYPASMK…RISDHKPQLA (141 aa)).

It belongs to the LRRTM family. As to expression, expressed in neuronal tissues.

The protein localises to the cell membrane. It is found in the postsynaptic cell membrane. Its function is as follows. May play a role in the development and maintenance of the vertebrate nervous system. Exhibits a limited synaptogenic activity in vitro, restricted to excitatory presynaptic differentiation. This is Leucine-rich repeat transmembrane neuronal protein 3 (Lrrtm3) from Mus musculus (Mouse).